The chain runs to 154 residues: Endoribonuclease YbeY (154 aa).

Residues His114, His118, and His124 each coordinate Zn(2+).

Belongs to the endoribonuclease YbeY family. The cofactor is Zn(2+).

The protein resides in the cytoplasm. Its function is as follows. Single strand-specific metallo-endoribonuclease involved in late-stage 70S ribosome quality control and in maturation of the 3' terminus of the 16S rRNA. The protein is Endoribonuclease YbeY of Haemophilus influenzae (strain PittEE).